Consider the following 147-residue polypeptide: Protein archease (147 aa).

Residues D17, D146, and V147 each contribute to the Ca(2+) site.

Belongs to the archease family.

Functionally, activates the tRNA-splicing ligase complex by facilitating the enzymatic turnover of catalytic subunit RtcB. Acts by promoting the guanylylation of RtcB, a key intermediate step in tRNA ligation. Can also alter the NTP specificity of RtcB such that ATP, dGTP or ITP is used efficiently. The protein is Protein archease of Pyrobaculum islandicum (strain DSM 4184 / JCM 9189 / GEO3).